The sequence spans 275 residues: Large ribosomal subunit protein uL2 (275 aa).

A disordered region spans residues 218-275 (RPQTRGSAMNPIDHPHGGGEGKTNSGRHPVSPWGMPTKGYKTRKKKASDKLIISKRKK). The segment covering 257 to 275 (YKTRKKKASDKLIISKRKK) has biased composition (basic residues).

It belongs to the universal ribosomal protein uL2 family. As to quaternary structure, part of the 50S ribosomal subunit. Forms a bridge to the 30S subunit in the 70S ribosome.

One of the primary rRNA binding proteins. Required for association of the 30S and 50S subunits to form the 70S ribosome, for tRNA binding and peptide bond formation. It has been suggested to have peptidyltransferase activity; this is somewhat controversial. Makes several contacts with the 16S rRNA in the 70S ribosome. This Sulfurovum sp. (strain NBC37-1) protein is Large ribosomal subunit protein uL2.